A 230-amino-acid chain; its full sequence is Large ribosomal subunit protein uL1 (230 aa).

This sequence belongs to the universal ribosomal protein uL1 family. In terms of assembly, part of the 50S ribosomal subunit.

In terms of biological role, binds directly to 23S rRNA. The L1 stalk is quite mobile in the ribosome, and is involved in E site tRNA release. Functionally, protein L1 is also a translational repressor protein, it controls the translation of the L11 operon by binding to its mRNA. The chain is Large ribosomal subunit protein uL1 from Bradyrhizobium sp. (strain BTAi1 / ATCC BAA-1182).